An 830-amino-acid chain; its full sequence is Envelope glycoprotein B (830 aa).

A signal peptide spans 1-19; the sequence is MSKMRVLFLAVFLMNSVLM. At 20–688 the chain is on the virion surface side; that stretch reads IYCDSDDYIR…GGVVSFLKNP (669 aa). Cystine bridges form between C41–C482, C58–C438, C131–C197, and C290–C337. Residues 98-104 form an involved in fusion and/or binding to host membrane region; sequence SYRDVGV. N-linked (GlcNAc...) asparagine; by host glycosylation occurs at N155. An involved in fusion and/or binding to host membrane region spans residues 184-191; sequence GPLWLYST. 5 N-linked (GlcNAc...) asparagine; by host glycosylation sites follow: N247, N286, N329, N361, and N486. Residues C510 and C548 are joined by a disulfide bond. 2 hydrophobic membrane proximal region regions span residues 634 to 686 and 644 to 685; these read IEAK…SFLK and SYVN…VSFL. A helical transmembrane segment spans residues 689–709; sequence FGGGLMLILAIVVVVIIIVVF. Residues 710–830 are Intravirion-facing; it reads VRQKHVLSKP…GYKSVNVEEA (121 aa). Positions 822 to 825 match the Internalization motif motif; the sequence is YKSV.

The protein belongs to the herpesviridae glycoprotein B family. In terms of assembly, homotrimer; disulfide-linked. Binds to heparan sulfate proteoglycans. Interacts with gH/gL heterodimer. In terms of processing, a proteolytic cleavage by host furin generates two subunits that remain linked by disulfide bonds.

The protein localises to the virion membrane. Its subcellular location is the host cell membrane. It is found in the host endosome membrane. The protein resides in the host Golgi apparatus membrane. Envelope glycoprotein that forms spikes at the surface of virion envelope. Essential for the initial attachment to heparan sulfate moieties of the host cell surface proteoglycans. Involved in fusion of viral and cellular membranes leading to virus entry into the host cell. Following initial binding to its host receptors, membrane fusion is mediated by the fusion machinery composed at least of gB and the heterodimer gH/gL. May be involved in the fusion between the virion envelope and the outer nuclear membrane during virion egress. This chain is Envelope glycoprotein B, found in Homo sapiens (Human).